The primary structure comprises 586 residues: Phosphomethylpyrimidine synthase (586 aa).

The segment at 1–33 (MKQSVSAEQIELKSSLPGSKKVYVDGPREGMKV) is disordered. Residues 22 to 33 (VYVDGPREGMKV) show a composition bias toward basic and acidic residues. Substrate contacts are provided by residues Asn193, Met222, Tyr251, His287, 307 to 309 (SRG), 348 to 351 (DGLR), and Glu387. His391 serves as a coordination point for Zn(2+). Tyr414 contributes to the substrate binding site. His455 provides a ligand contact to Zn(2+). 3 residues coordinate [4Fe-4S] cluster: Cys535, Cys538, and Cys543.

It belongs to the ThiC family. Requires [4Fe-4S] cluster as cofactor.

The catalysed reaction is 5-amino-1-(5-phospho-beta-D-ribosyl)imidazole + S-adenosyl-L-methionine = 4-amino-2-methyl-5-(phosphooxymethyl)pyrimidine + CO + 5'-deoxyadenosine + formate + L-methionine + 3 H(+). It participates in cofactor biosynthesis; thiamine diphosphate biosynthesis. Functionally, catalyzes the synthesis of the hydroxymethylpyrimidine phosphate (HMP-P) moiety of thiamine from aminoimidazole ribotide (AIR) in a radical S-adenosyl-L-methionine (SAM)-dependent reaction. This is Phosphomethylpyrimidine synthase from Bacillus cereus (strain B4264).